Consider the following 204-residue polypeptide: Terpene cyclase trt1 (204 aa).

The next 5 helical transmembrane spans lie at 44-64, 67-87, 103-122, 132-154, and 169-189; these read FMSI…YPIA, HWAG…FIVA, FARL…HLAL, FFWS…LVCR, and WFYI…FFYF.

The protein belongs to the paxB family.

It is found in the membrane. It participates in secondary metabolite biosynthesis; terpenoid biosynthesis. Its function is as follows. Terpene cyclase; part of the gene cluster that mediates the biosynthesis of terretonin, a fungal meroterpenoid that acts as a mycotoxin. The first step of the pathway is the synthesis of 3,5-dimethylorsellinic acid (DMOA) by the polyketide synthase trt4. DMOA is then prenylated into farnesyl-DMOA by the polyprenyl transferase trt2. Methylation by the methyltransferase trt5 then leads to farnesyl-DMOA methyl ester which is further subject to epoxidation by the FAD-dependent monooxygenase trt8 to yield epoxyfarnesyl-DMOA methyl ester. Cyclization of epoxyfarnesyl-DMOA methyl ester by the terpene cyclase trt1 leads to a tetracycle intermediate which is in turn converted to preterretonin. Dehydrogenase trt9 comes next to transform preterretonin to preterrenoid. The FAD-dependent monooxygenase trt3 is then required for the C-hydroxylation at C16 of preterrenoid to yield terrenoid. The cytochrome P450 trt6 catalyzes three successive oxidations to transform terrenoid into an unstable intermediate, which then undergoes the D-ring expansion and unusual rearrangement of the methoxy group to afford the core skeleton of terretonin. Trt14 catalyzes the D-ring expansion of terretonin involving intramolecular methoxy rearrangement as well as the hydrolysis of the expanded D-ring and the methyl ester moiety. Finally, the nonheme iron-dependent dioxygenase trt7 accomplishes the last two oxidation reactions steps to complete the biosynthesis of terretonin. Terretonin C is produced via spontaneous decarboxylation of the terretonin precursor. Another shunt product of the terretonin biosynthesis is dihydrofarnesyl-DMOA, derived from epoxyfarnesyl-DMOA through hydrolysis of the epoxide. This is Terpene cyclase trt1 from Aspergillus terreus (strain NIH 2624 / FGSC A1156).